Here is a 601-residue protein sequence, read N- to C-terminus: Sestrin homolog (601 aa).

Residues 1-11 (MISMGMTSKGQ) show a composition bias toward polar residues. The tract at residues 1 to 58 (MISMGMTSKGQNVDGAPAGNSSSEWIISSSSSPFQANKRYSLDPPFGSDYSPPASPQN) is disordered. Asn-20 is a glycosylation site (N-linked (GlcNAc...) asparagine). Residues 21–32 (SSSEWIISSSSS) show a composition bias toward low complexity. 2 N-linked (GlcNAc...) asparagine glycosylation sites follow: Asn-322 and Asn-330. The interval 355–425 (RRSQQQDDDD…DSSSSTLSQS (71 aa)) is disordered. Over residues 368 to 379 (LHDRQQDFHNAG) the composition is skewed to basic and acidic residues. Residues 380 to 425 (DDSQSSNNNTTTTTTTTTTTTTTTNTNTTSNSAGGGDSSSSTLSQS) are compositionally biased toward low complexity. N-linked (GlcNAc...) asparagine glycosylation is found at Asn-387, Asn-388, Asn-406, Asn-438, and Asn-499.

The protein belongs to the sestrin family.

The protein localises to the nucleus. The protein resides in the cytoplasm. May function as a negative feedback regulator of TOR function. This Dictyostelium discoideum (Social amoeba) protein is Sestrin homolog.